Consider the following 578-residue polypeptide: Putative ankyrin repeat protein FPV022 (578 aa).

11 ANK repeats span residues 4–34 (RRKS…DLNK), 38–67 (KNRT…KMSA), 68–97 (CKVP…SVDV), 100–129 (KGET…SGPY), 160–189 (YGHT…ITDN), 222–251 (EGTT…DPKV), 255–287 (HSVS…MVNM), 320–349 (YLSE…NINK), 353–382 (YGNI…DVNA), 386–415 (DGNT…DINS), and 419–449 (NGRT…KKNK).

The protein is Putative ankyrin repeat protein FPV022 of Fowlpox virus (strain NVSL) (FPV).